The primary structure comprises 79 residues: Small ribosomal subunit protein bS16 (79 aa).

This sequence belongs to the bacterial ribosomal protein bS16 family.

The sequence is that of Small ribosomal subunit protein bS16 from Solidesulfovibrio magneticus (strain ATCC 700980 / DSM 13731 / RS-1) (Desulfovibrio magneticus).